Reading from the N-terminus, the 487-residue chain is MTTATAEAQASTAQPAGVGRIARVTGPVVDIEFPHDSIPGIYNALKTTITIGDRSTEITLEVAQHLGDDLVRAISLKPTDGLVRGGEVRDTGSLITVPVGDVTKGKVFDVTGEILNAEPGEKIEIAERWPIHRQPPSFDHLESKTQLFETGIKVIDLLTPYVQGGKIGLFGGAGVGKTVLIQEMVQRVAQDHGGVSVFAGVGERTREGNDLIHEMEEAGVFDKTALVFGQMDEPPGTRLRVALSALTMAEYFRDVQKQDVLLFIDNIFRFTQAGSEVSTLLGRMPSAVGYQPNLADEMGLLQERITSTRGHSITSLQAIYVPADDYTDPAPATTFAHLDATTELSREIASKGLYPAVDPLTSTSRILDPRYLGADHYRVATTVKQILQKNKELQEIIAILGVDELSEEDKITVSRARRIQQFLSQNTYMAKKFTGVEGSTVPLKETIESFDAIAKGEFDHVAEQAFFNVGALSDVEEKWAQIQKENG.

An ATP-binding site is contributed by 171-178 (GGAGVGKT).

This sequence belongs to the ATPase alpha/beta chains family. F-type ATPases have 2 components, CF(1) - the catalytic core - and CF(0) - the membrane proton channel. CF(1) has five subunits: alpha(3), beta(3), gamma(1), delta(1), epsilon(1). CF(0) has three main subunits: a(1), b(2) and c(9-12). The alpha and beta chains form an alternating ring which encloses part of the gamma chain. CF(1) is attached to CF(0) by a central stalk formed by the gamma and epsilon chains, while a peripheral stalk is formed by the delta and b chains.

It localises to the cell membrane. It carries out the reaction ATP + H2O + 4 H(+)(in) = ADP + phosphate + 5 H(+)(out). Functionally, produces ATP from ADP in the presence of a proton gradient across the membrane. The catalytic sites are hosted primarily by the beta subunits. This Leifsonia xyli subsp. xyli (strain CTCB07) protein is ATP synthase subunit beta.